The following is a 130-amino-acid chain: Small ribosomal subunit protein uS8 (130 aa).

This sequence belongs to the universal ribosomal protein uS8 family. Part of the 30S ribosomal subunit. Contacts proteins S5 and S12.

In terms of biological role, one of the primary rRNA binding proteins, it binds directly to 16S rRNA central domain where it helps coordinate assembly of the platform of the 30S subunit. This chain is Small ribosomal subunit protein uS8, found in Pseudomonas fluorescens (strain ATCC BAA-477 / NRRL B-23932 / Pf-5).